Consider the following 813-residue polypeptide: Tax1-binding protein 1 homolog (813 aa).

3 positions are modified to phosphoserine: serine 124, serine 138, and serine 225. A coiled-coil region spans residues 144–627 (TTKAGLLELK…LENQAERKME (484 aa)). The segment at 320 to 420 (EEIGRLQLCL…ELKLNAMKKD (101 aa)) is oligomerization. Residues 489–502 (DASVNTDPATSAST) are compositionally biased toward polar residues. The segment at 489-508 (DASVNTDPATSASTVDVKPS) is disordered. Phosphoserine occurs at positions 617, 633, and 690. The disordered stretch occupies residues 663-738 (YASQETRDGA…DPPSQHLRGH (76 aa)). UBZ1-type zinc fingers lie at residues 751-777 (HKKCPLCELMFPPNYDQSKFEEHVESH) and 778-804 (WKVCPMCSEQFPPDYDQQVFERHVQTH). Zn(2+)-binding residues include cysteine 754, cysteine 757, histidine 773, histidine 777, cysteine 781, cysteine 784, histidine 800, and histidine 804.

In terms of assembly, homooligomer. Interacts with TNFAIP3. Interacts with STARD13. Interacts with MYO6. Interacts with TOM1; the interaction is indirect and is mediated by MYO6, which acts as a bridge between TOM1 and TAX1BP1. Interacts with MAVS; this interaction induces MAVS polyubiquitination. Interacts with TNIP1. Interacts with TRAF6; this interaction mediates deubiquitination of TRAF6 and inhibition of NF-kappa-B activation. Interacts with RIPK1; this interaction negatively regulates RIPK1 ubiquitination. Interacts with NBR1. Interacts with TBK1. Interacts with RB1CC1. Interacts with SQSTM1. Interacts with AZI2.

Its subcellular location is the cytoplasm. The protein localises to the mitochondrion. It is found in the preautophagosomal structure. The protein resides in the cytoplasmic vesicle. It localises to the autophagosome. In terms of biological role, ubiquitin-binding adapter that participates in inflammatory, antiviral and innate immune processes as well as selective autophagy regulation. Plays a key role in the negative regulation of NF-kappa-B and IRF3 signalings by acting as an adapter for the ubiquitin-editing enzyme A20/TNFAIP3 to bind and inactivate its substrates. Disrupts the interactions between the E3 ubiquitin ligase TRAF3 and TBK1/IKBKE to attenuate 'Lys63'-linked polyubiquitination of TBK1 and thereby IFN-beta production. Also recruits A20/TNFAIP3 to ubiquitinated signaling proteins TRAF6 and RIPK1, leading to their deubiquitination and disruption of IL-1 and TNF-induced NF-kappa-B signaling pathways. Inhibits virus-induced apoptosis by inducing the 'Lys-48'-linked polyubiquitination and degradation of MAVS via recruitment of the E3 ligase ITCH, thereby attenuating MAVS-mediated apoptosis signaling. As a macroautophagy/autophagy receptor, facilitates the xenophagic clearance of pathogenic bacteria such as Salmonella typhimurium and Mycobacterium tuberculosis. Upon NBR1 recruitment to the SQSTM1-ubiquitin condensates, acts as the major recruiter of RB1CC1 to these ubiquitin condensates to promote their autophagic degradation. This is Tax1-binding protein 1 homolog (TAX1BP1) from Pongo abelii (Sumatran orangutan).